Reading from the N-terminus, the 361-residue chain is Peptide chain release factor 1 (361 aa).

Glutamine 236 carries the post-translational modification N5-methylglutamine. Residues 285 to 309 (TAKDSARAADRKAQVGSGDRSERIR) are compositionally biased toward basic and acidic residues. Positions 285–311 (TAKDSARAADRKAQVGSGDRSERIRTY) are disordered.

The protein belongs to the prokaryotic/mitochondrial release factor family. Post-translationally, methylated by PrmC. Methylation increases the termination efficiency of RF1.

It is found in the cytoplasm. Functionally, peptide chain release factor 1 directs the termination of translation in response to the peptide chain termination codons UAG and UAA. In Methylorubrum extorquens (strain CM4 / NCIMB 13688) (Methylobacterium extorquens), this protein is Peptide chain release factor 1.